Here is a 210-residue protein sequence, read N- to C-terminus: Inner membrane-spanning protein YciB (210 aa).

The next 6 membrane-spanning stretches (helical) occupy residues 12 to 32 (EVSPLLKLVLELGPLMVFFFA), 53 to 73 (IFIATGLFMAATAAALIASWI), 78 to 98 (LPMMPLVSGIVVFVFGALTLW), 115 to 135 (LFGAILLGGLLFGKSLLGYVF), 148 to 168 (KLTIRWGVFFLFLAVLNEVIW), and 175 to 195 (FWVAFKVWGTMPITILFTLAQ).

It belongs to the YciB family.

It localises to the cell inner membrane. Plays a role in cell envelope biogenesis, maintenance of cell envelope integrity and membrane homeostasis. The polypeptide is Inner membrane-spanning protein YciB (Rhizobium meliloti (strain 1021) (Ensifer meliloti)).